The sequence spans 152 residues: MATLEQRLTDLLEAPVVALGFELWGIEFIRAGKHSTLRVYIDGEHGVSVENCAEVSHQVGAIMDVEDPITEEYYLEVSSPGLDRPLFKVAQFEKYVGQEAAVTLRMATNNRRKFKGVIKAVQGDMITLTVDGKDEVLAFTNIQKANIVPNFG.

It belongs to the RimP family.

It localises to the cytoplasm. Functionally, required for maturation of 30S ribosomal subunits. The sequence is that of Ribosome maturation factor RimP from Aeromonas hydrophila subsp. hydrophila (strain ATCC 7966 / DSM 30187 / BCRC 13018 / CCUG 14551 / JCM 1027 / KCTC 2358 / NCIMB 9240 / NCTC 8049).